We begin with the raw amino-acid sequence, 85 residues long: UPF0386 protein RL2079 (85 aa).

Belongs to the UPF0386 family.

The polypeptide is UPF0386 protein RL2079 (Rhizobium johnstonii (strain DSM 114642 / LMG 32736 / 3841) (Rhizobium leguminosarum bv. viciae)).